We begin with the raw amino-acid sequence, 445 residues long: MGVMFGTDGVRGVANRDLSPLLAFKIGRAGAHVLARQSPNAAMVIGRDTRISGDMLEAALVAGICSAGVDVLKVGVMPTPAVAYLTRKLEAAAGVVISASHNPVDDNGIKFFGATGYKLSDEVEAEIEALVMDECAGVPWPTGGRVGRVRQVGDAADLYVKFACSTAGVDLSGLKIVVDCANGAAYQVAPRVYSRLGAEVVPIFNRPDGININDGCGSTHPEALMEAVVSEKADLGLAHDGDADRVLAVDADGRLVDGDQIMVICARSLHEKGLLANETVVVTVMSNLGLHLALRESGIRVVQTKVGDRYVLEELLRNGARFGGEQSGHIIFLDHNTTGDGILTALQLLSVIKETGKPLKELAGQMERLPQLLENVRVADKALVMNSPVLAEAIEREERLLEGMGRILVRPSGTEPLVRVMAEGKNMGQLKEIVGRLVNIIKEID.

Ser-100 functions as the Phosphoserine intermediate in the catalytic mechanism. Mg(2+) contacts are provided by Ser-100, Asp-240, Asp-242, and Asp-244. Phosphoserine is present on Ser-100.

This sequence belongs to the phosphohexose mutase family. Requires Mg(2+) as cofactor. Activated by phosphorylation.

The catalysed reaction is alpha-D-glucosamine 1-phosphate = D-glucosamine 6-phosphate. Functionally, catalyzes the conversion of glucosamine-6-phosphate to glucosamine-1-phosphate. In Pelotomaculum thermopropionicum (strain DSM 13744 / JCM 10971 / SI), this protein is Phosphoglucosamine mutase.